Consider the following 565-residue polypeptide: SRSF protein kinase 3 (565 aa).

Positions methionine 1 to glutamine 44 are disordered. Residues serine 10–serine 31 show a composition bias toward low complexity. Phosphoserine is present on serine 49. A Protein kinase domain is found at tyrosine 78–leucine 563. ATP is bound by residues leucine 84–valine 92 and lysine 107. Aspartate 211 serves as the catalytic Proton acceptor. Over residues tryptophan 236–proline 253 the composition is skewed to polar residues. Disordered stretches follow at residues tryptophan 236 to leucine 280 and alanine 295 to glycine 350. A compositionally biased stretch (basic residues) spans serine 262–lysine 277. Residues alanine 325–glycine 350 show a composition bias toward low complexity. At serine 328 the chain carries Phosphoserine.

It belongs to the protein kinase superfamily. CMGC Ser/Thr protein kinase family. Exclusively expressed in skeletal and heart muscle.

The protein resides in the nucleus. It localises to the cytoplasm. The catalysed reaction is L-seryl-[protein] + ATP = O-phospho-L-seryl-[protein] + ADP + H(+). It carries out the reaction L-threonyl-[protein] + ATP = O-phospho-L-threonyl-[protein] + ADP + H(+). In terms of biological role, serine/arginine-rich protein-specific kinase which specifically phosphorylates its substrates at serine residues located in regions rich in arginine/serine dipeptides, known as RS domains. Phosphorylates the SR splicing factor SRSF1 and the lamin-B receptor (LBR) in vitro. Required for normal muscle development. This Mus musculus (Mouse) protein is SRSF protein kinase 3 (Srpk3).